A 419-amino-acid chain; its full sequence is Serine hydroxymethyltransferase (419 aa).

Residues leucine 121 and 125 to 127 each bind (6S)-5,6,7,8-tetrahydrofolate; that span reads GHL. Lysine 230 carries the post-translational modification N6-(pyridoxal phosphate)lysine.

It belongs to the SHMT family. In terms of assembly, homodimer. Pyridoxal 5'-phosphate serves as cofactor.

The protein localises to the cytoplasm. The enzyme catalyses (6R)-5,10-methylene-5,6,7,8-tetrahydrofolate + glycine + H2O = (6S)-5,6,7,8-tetrahydrofolate + L-serine. Its pathway is one-carbon metabolism; tetrahydrofolate interconversion. It functions in the pathway amino-acid biosynthesis; glycine biosynthesis; glycine from L-serine: step 1/1. In terms of biological role, catalyzes the reversible interconversion of serine and glycine with tetrahydrofolate (THF) serving as the one-carbon carrier. This reaction serves as the major source of one-carbon groups required for the biosynthesis of purines, thymidylate, methionine, and other important biomolecules. Also exhibits THF-independent aldolase activity toward beta-hydroxyamino acids, producing glycine and aldehydes, via a retro-aldol mechanism. The sequence is that of Serine hydroxymethyltransferase from Vesicomyosocius okutanii subsp. Calyptogena okutanii (strain HA).